Reading from the N-terminus, the 159-residue chain is Probable NADH dehydrogenase [ubiquinone] 1 alpha subcomplex subunit 12 (159 aa).

It belongs to the complex I NDUFA12 subunit family. In terms of assembly, complex I is composed of at least 49 different subunits.

The protein resides in the mitochondrion inner membrane. Its function is as follows. Accessory subunit of the mitochondrial membrane respiratory chain NADH dehydrogenase (Complex I), that is believed not to be involved in catalysis. Complex I functions in the transfer of electrons from NADH to the respiratory chain. The immediate electron acceptor for the enzyme is believed to be ubiquinone. This chain is Probable NADH dehydrogenase [ubiquinone] 1 alpha subcomplex subunit 12, found in Arabidopsis thaliana (Mouse-ear cress).